Here is a 739-residue protein sequence, read N- to C-terminus: Photosystem I P700 chlorophyll a apoprotein A1 (739 aa).

The next 8 helical transmembrane spans lie at 61-84, 147-170, 186-210, 281-299, 336-359, 375-401, 423-445, and 520-538; these read IFSA…FHGA, LYVT…FHYH, MNHH…HVSL, VAHH…GHMY, WHAQ…HHMY, LSLF…IFMV, AIIS…LYIH, and FMVH…LILL. The [4Fe-4S] cluster site is built by Cys-562 and Cys-571. 2 consecutive transmembrane segments (helical) span residues 578–599 and 653–675; these read HVFL…HFSW and LSAY…MFLF. His-664 contributes to the chlorophyll a' binding site. Residues Met-672 and Tyr-680 each coordinate chlorophyll a. Trp-681 is a binding site for phylloquinone. A helical transmembrane segment spans residues 713–733; that stretch reads AVGVAHYLLGGIVTTWAFFLA.

It belongs to the PsaA/PsaB family. As to quaternary structure, the PsaA/B heterodimer binds the P700 chlorophyll special pair and subsequent electron acceptors. PSI consists of a core antenna complex that captures photons, and an electron transfer chain that converts photonic excitation into a charge separation. The cyanobacterial PSI reaction center is composed of one copy each of PsaA,B,C,D,E,F,I,J,K,L,M and X, and forms trimeric complexes. Requires PSI electron transfer chain: 5 chlorophyll a, 1 chlorophyll a', 2 phylloquinones and 3 4Fe-4S clusters. PSI core antenna: 90 chlorophyll a, 22 carotenoids, 3 phospholipids and 1 galactolipid. P700 is a chlorophyll a/chlorophyll a' dimer, A0 is one or more chlorophyll a, A1 is one or both phylloquinones and FX is a shared 4Fe-4S iron-sulfur center. as cofactor.

The protein resides in the cellular thylakoid membrane. It catalyses the reaction reduced [plastocyanin] + hnu + oxidized [2Fe-2S]-[ferredoxin] = oxidized [plastocyanin] + reduced [2Fe-2S]-[ferredoxin]. Its function is as follows. PsaA and PsaB bind P700, the primary electron donor of photosystem I (PSI), as well as the electron acceptors A0, A1 and FX. PSI is a plastocyanin/cytochrome c6-ferredoxin oxidoreductase, converting photonic excitation into a charge separation, which transfers an electron from the donor P700 chlorophyll pair to the spectroscopically characterized acceptors A0, A1, FX, FA and FB in turn. Oxidized P700 is reduced on the lumenal side of the thylakoid membrane by plastocyanin or cytochrome c6. In Picosynechococcus sp. (strain ATCC 27264 / PCC 7002 / PR-6) (Agmenellum quadruplicatum), this protein is Photosystem I P700 chlorophyll a apoprotein A1.